The chain runs to 305 residues: Ribonuclease BN (305 aa).

Zn(2+) is bound by residues His64, His66, Asp68, His69, His141, Asp212, and His270. Asp68 functions as the Proton acceptor in the catalytic mechanism.

Belongs to the RNase Z family. RNase BN subfamily. In terms of assembly, homodimer. The cofactor is Zn(2+).

Zinc phosphodiesterase, which has both exoribonuclease and endoribonuclease activities. The protein is Ribonuclease BN of Shigella boydii serotype 18 (strain CDC 3083-94 / BS512).